The chain runs to 337 residues: tRNA-dihydrouridine synthase B (337 aa).

FMN is bound by residues 19 to 21 and Q73; that span reads PMA. C103 acts as the Proton donor in catalysis. Residues K142, 203 to 205, and 227 to 228 contribute to the FMN site; these read NGD and GR.

Belongs to the Dus family. DusB subfamily. FMN serves as cofactor.

It carries out the reaction a 5,6-dihydrouridine in tRNA + NAD(+) = a uridine in tRNA + NADH + H(+). The catalysed reaction is a 5,6-dihydrouridine in tRNA + NADP(+) = a uridine in tRNA + NADPH + H(+). Functionally, catalyzes the synthesis of 5,6-dihydrouridine (D), a modified base found in the D-loop of most tRNAs, via the reduction of the C5-C6 double bond in target uridines. The protein is tRNA-dihydrouridine synthase B of Pseudomonas putida (strain ATCC 47054 / DSM 6125 / CFBP 8728 / NCIMB 11950 / KT2440).